Reading from the N-terminus, the 260-residue chain is Dehydrin ERD10 (260 aa).

Disordered stretches follow at residues 1-187, 197-216, and 240-260; these read MAEE…EEEK, KLPGHSKKPEDSQVVNTTPL, and KLPGYHAKTTGEEEKKEKVSD. Ala2 carries the N-acetylalanine modification. Residues 26–44 show a composition bias toward basic and acidic residues; it reads EIKERGMFDFLKKKEEVKP. Ser61 is subject to Phosphoserine. Basic and acidic residues-rich tracts occupy residues 67–102, 130–140, 148–162, 176–187, and 197–207; these read VAKHEEEEHKPTLLEQLHQKHEEEEENKPSLLDKLH, IVEGDHVKTVE, DRIKEKFPLGEKPGG, SVEDHKPEEEEK, and KLPGHSKKPED. A run of 2 repeats spans residues 184 to 204 and 227 to 247. The 2 X 21 AA repeats, Lys-rich stretch occupies residues 184-247; that stretch reads EEEKKGFMDK…KEKLPGYHAK (64 aa).

This sequence belongs to the plant dehydrin family. In terms of tissue distribution, in stems, cauline leaves, roots and flowers. Low levels found in maturing seeds. Absent in dry seeds.

This chain is Dehydrin ERD10 (ERD10), found in Arabidopsis thaliana (Mouse-ear cress).